We begin with the raw amino-acid sequence, 539 residues long: G protein-coupled receptor associated sorting protein 3 (539 aa).

Residues Met-1–Ala-10 are compositionally biased toward basic residues. Disordered regions lie at residues Met-1–Phe-111 and Asn-132–Glu-170. 2 stretches are compositionally biased toward basic and acidic residues: residues Val-66 to Ala-80 and Phe-88 to Ser-106. Polar residues predominate over residues Asn-132 to Gln-146.

Belongs to the GPRASP family. As to quaternary structure, homodimer.

The protein resides in the cytoplasm. It is found in the nucleus. In terms of biological role, survival and differentiation promoting protein that plays a role in the regulation of neurosynaptogenesis. Induces phosphatase PP2A activity which results in APP dephosphorylation and inhibits BACE1-mediated processing of APP. This chain is G protein-coupled receptor associated sorting protein 3 (Gprasp3), found in Rattus norvegicus (Rat).